The chain runs to 81 residues: UPF0180 protein RBAM_013970 (81 aa).

It belongs to the UPF0180 family.

The polypeptide is UPF0180 protein RBAM_013970 (Bacillus velezensis (strain DSM 23117 / BGSC 10A6 / LMG 26770 / FZB42) (Bacillus amyloliquefaciens subsp. plantarum)).